The chain runs to 414 residues: Mannan endo-1,4-beta-mannosidase 2 (414 aa).

A signal peptide spans 1–25 (MAYFQRLISCIFVLFLLSLAFACEA). Substrate-binding residues include tryptophan 95 and asparagine 210. Glutamate 211 serves as the catalytic Proton donor. Tyrosine 288 serves as a coordination point for substrate. The Nucleophile role is filled by glutamate 328. Residue tryptophan 370 participates in substrate binding.

The protein belongs to the glycosyl hydrolase 5 (cellulase A) family.

The protein localises to the secreted. It carries out the reaction Random hydrolysis of (1-&gt;4)-beta-D-mannosidic linkages in mannans, galactomannans and glucomannans.. Functionally, possesses endo-beta-mannanase activity in vitro. May be involved in seed germination by weakening the endosperm cap prior to radicle emergence. In Solanum lycopersicum (Tomato), this protein is Mannan endo-1,4-beta-mannosidase 2 (MAN2).